A 335-amino-acid polypeptide reads, in one-letter code: Glycerol-3-phosphate dehydrogenase [NAD(P)+] (335 aa).

Lysine 109 provides a ligand contact to NADPH. The sn-glycerol 3-phosphate site is built by lysine 109, glycine 141, and serine 143. Alanine 145 serves as a coordination point for NADPH. Positions 196, 249, 259, 260, and 261 each coordinate sn-glycerol 3-phosphate. The Proton acceptor role is filled by lysine 196. An NADPH-binding site is contributed by arginine 260. Residue glutamate 283 coordinates NADPH.

The protein belongs to the NAD-dependent glycerol-3-phosphate dehydrogenase family.

Its subcellular location is the cytoplasm. The enzyme catalyses sn-glycerol 3-phosphate + NAD(+) = dihydroxyacetone phosphate + NADH + H(+). It catalyses the reaction sn-glycerol 3-phosphate + NADP(+) = dihydroxyacetone phosphate + NADPH + H(+). Its pathway is membrane lipid metabolism; glycerophospholipid metabolism. Catalyzes the reduction of the glycolytic intermediate dihydroxyacetone phosphate (DHAP) to sn-glycerol 3-phosphate (G3P), the key precursor for phospholipid synthesis. The sequence is that of Glycerol-3-phosphate dehydrogenase [NAD(P)+] from Mycoplasma mobile (strain ATCC 43663 / 163K / NCTC 11711) (Mesomycoplasma mobile).